The primary structure comprises 1110 residues: Serine/threonine-protein kinase PknK (1110 aa).

The Protein kinase domain maps to 26–283 (FDNVEEIGRG…TAADVGEELR (258 aa)). ATP is bound by residues 32 to 40 (IGRGGFGVV) and Lys55. Asp149 (proton acceptor) is an active-site residue. Residues Asn154 and Asp167 each contribute to the Mg(2+) site. A phosphothreonine; by autocatalysis mark is found at Thr179 and Thr181. The interval 308 to 343 (RSPEAHAAHRHTGGGTPTVPTPPTPATKYRPSVPTG) is disordered.

This sequence belongs to the protein kinase superfamily. Ser/Thr protein kinase family. As to quaternary structure, forms oligomeric complexes in solution. In terms of processing, can autophosphorylate the carboxyl terminal region in addition to Thr-179 and Thr-181.

Its subcellular location is the cytoplasm. It localises to the cell membrane. The protein resides in the secreted. It is found in the cell wall. The enzyme catalyses L-seryl-[protein] + ATP = O-phospho-L-seryl-[protein] + ADP + H(+). The catalysed reaction is L-threonyl-[protein] + ATP = O-phospho-L-threonyl-[protein] + ADP + H(+). Functionally, key microbial factor involved in regulation of early and late events in tuberculosis infection, and in host-pathogen interactions. The protein is Serine/threonine-protein kinase PknK (pknK) of Mycobacterium tuberculosis (strain CDC 1551 / Oshkosh).